We begin with the raw amino-acid sequence, 234 residues long: Small ribosomal subunit protein uS3 (234 aa).

The KH type-2 domain occupies 39–107 (VRDYLKKKLS…PVHVNIEEVR (69 aa)). Residues 212–234 (EQPAAAEQEKRGKKSGVKHAAAS) form a disordered region.

Belongs to the universal ribosomal protein uS3 family. As to quaternary structure, part of the 30S ribosomal subunit. Forms a tight complex with proteins S10 and S14.

In terms of biological role, binds the lower part of the 30S subunit head. Binds mRNA in the 70S ribosome, positioning it for translation. In Thiobacillus denitrificans (strain ATCC 25259 / T1), this protein is Small ribosomal subunit protein uS3.